Consider the following 191-residue polypeptide: Rho-related GTP-binding protein RhoH (191 aa).

11–18 (GDSAVGKT) is a binding site for GTP. An Effector region motif is present at residues 33–41 (YKPTVYENT). 58-62 (DTAGN) is a GTP binding site. The segment at 73 to 86 (YQQADVVLMCYSVA) is interaction with ZAP70. 116 to 119 (TQTD) is a GTP binding site. C188 is modified (cysteine methyl ester). C188 carries S-geranylgeranyl cysteine lipidation. Positions 189–191 (KIL) are cleaved as a propeptide — removed in mature form.

Belongs to the small GTPase superfamily. Rho family. Interacts with GDI1 and GDI2. Interacts with ZAP70 (via SH2 domains) and the interaction is enhanced by its phosphorylation by LCK. Interacts with SYK and the interaction is enhanced by its phosphorylation by FYN. Post-translationally, phosphorylated on tyrosine by LCK. Phosphorylated by FYN. Phosphorylation enhances the interactions with ZAP70 and SYK and is critical for its function in thymocyte development.

The protein resides in the cytoplasm. It localises to the cell membrane. Functionally, binds GTP but lacks intrinsic GTPase activity and is resistant to Rho-specific GTPase-activating proteins. Inhibits the activation of NF-kappa-B by TNF and IKKB and the activation of CRK/p38 by TNF. Inhibits activities of RAC1, RHOA and CDC42. Negatively regulates leukotriene production in neutrophils. Negative regulator of hematopoietic progenitor cell proliferation, survival and migration. Critical regulator of thymocyte development and T-cell antigen receptor (TCR) signaling by mediating recruitment and activation of ZAP70. Required for phosphorylation of CD3Z, membrane translocation of ZAP70 and subsequent activation of the ZAP70-mediated pathways. Essential for efficient beta-selection and positive selection by promoting the ZAP70-dependent phosphorylation of the LAT signalosome during pre-TCR and TCR signaling. Crucial for thymocyte maturation during DN3 to DN4 transition and during positive selection. Plays critical roles in mast cell function by facilitating phosphorylation of SYK in Fc epsilon RI-mediated signal transduction. Essential for the phosphorylation of LAT, LCP2, PLCG1 and PLCG2 and for Ca(2+) mobilization in mast cells. The chain is Rho-related GTP-binding protein RhoH (RHOH) from Bos taurus (Bovine).